The following is a 197-amino-acid chain: Imidazoleglycerol-phosphate dehydratase (197 aa).

The protein belongs to the imidazoleglycerol-phosphate dehydratase family.

It is found in the cytoplasm. The catalysed reaction is D-erythro-1-(imidazol-4-yl)glycerol 3-phosphate = 3-(imidazol-4-yl)-2-oxopropyl phosphate + H2O. The protein operates within amino-acid biosynthesis; L-histidine biosynthesis; L-histidine from 5-phospho-alpha-D-ribose 1-diphosphate: step 6/9. This Halorhodospira halophila (strain DSM 244 / SL1) (Ectothiorhodospira halophila (strain DSM 244 / SL1)) protein is Imidazoleglycerol-phosphate dehydratase.